The primary structure comprises 246 residues: Myelin-oligodendrocyte glycoprotein (246 aa).

The signal sequence occupies residues 1-28; the sequence is MACLWSFSWPSCFLSLLLLLLQLSCSYA. Over 29–156 the chain is Extracellular; it reads GQFRVIGPGY…FYWVNPGVLT (128 aa). The Ig-like V-type domain maps to 31-144; it reads FRVIGPGYPI…EEAAMELKVE (114 aa). Cys-52 and Cys-126 are oxidised to a cystine. Asn-59 carries N-linked (GlcNAc...) asparagine glycosylation. The helical transmembrane segment at 157–177 threads the bilayer; sequence LIALVPTILLQVPVGLVFLFL. Residues 178–209 lie on the Cytoplasmic side of the membrane; the sequence is QHRLRGKLRAEVENLHRTFDPHFLRVPCWKIT. Residues 210 to 230 form a helical membrane-spanning segment; sequence LFVIVPVLGPLVALIICYNWL. The Extracellular segment spans residues 231-246; the sequence is HRRLAGQFLEELRNPF.

The protein belongs to the immunoglobulin superfamily. BTN/MOG family. In terms of assembly, homodimer. In terms of tissue distribution, found exclusively in the CNS, where it is localized on the surface of myelin and oligodendrocyte cytoplasmic membranes. Reduced expression levels are observed in jimpy and quacking dysmyelinating mutant mice.

The protein resides in the membrane. In terms of biological role, minor component of the myelin sheath. May be involved in completion and/or maintenance of the myelin sheath and in cell-cell communication. Mediates homophilic cell-cell adhesion. The chain is Myelin-oligodendrocyte glycoprotein (Mog) from Mus musculus (Mouse).